The following is a 187-amino-acid chain: Ribosome-recycling factor (187 aa).

This sequence belongs to the RRF family.

The protein localises to the cytoplasm. Functionally, responsible for the release of ribosomes from messenger RNA at the termination of protein biosynthesis. May increase the efficiency of translation by recycling ribosomes from one round of translation to another. The sequence is that of Ribosome-recycling factor from Orientia tsutsugamushi (strain Boryong) (Rickettsia tsutsugamushi).